Here is a 398-residue protein sequence, read N- to C-terminus: E3 ubiquitin-protein ligase RSL1 (398 aa).

Residues 155–374 (QKETCNICLN…LDLTQCCGSC (220 aa)) form a TRIAD supradomain region. Residues Cys-159, Cys-162, Cys-183, Cys-186, Cys-246, Cys-251, Cys-271, Cys-274, Cys-279, Cys-282, His-287, Cys-292, Cys-321, and Cys-324 each contribute to the Zn(2+) site. An RING-type 3; degenerate zinc finger spans residues 159-207 (CNICLNDDINADQMFSVDKSGHMCCSECVKRHIEVRLLEGSLITCPHYR). The RING-type 1 zinc finger occupies 159–208 (CNICLNDDINADQMFSVDKSGHMCCSECVKRHIEVRLLEGSLITCPHYRC). Residues 233-292 (TKDELIPVMDRVYCPNPRCSTLMSETELSGLNIGVRRCCVKCGEPFCVKCKVSWHNNLSC) form an IBR-type zinc finger. The RING-type 2; atypical zinc-finger motif lies at 321–349 (CSKCKHMIELSSGCISVVCRCGHTFCYQC). The segment at 321–356 (CSKCKHMIELSSGCISVVCRCGHTFCYQCGADAGDC) adopts an RING-type 4; degenerate zinc-finger fold. Cys-334 is an active-site residue. Zn(2+)-binding residues include Cys-339, Cys-341, Cys-346, Cys-349, His-358, and Cys-370. The chain crosses the membrane as a helical span at residues 374-394 (CCCFVFFLVIIAIVVTIILLV).

This sequence belongs to the RBR family. In terms of assembly, interacts with the PYL4 and PYR1 ABA receptors at the plasma membrane. Zn(2+) is required as a cofactor.

It localises to the cell membrane. It is found in the vacuole membrane. It carries out the reaction [E2 ubiquitin-conjugating enzyme]-S-ubiquitinyl-L-cysteine + [acceptor protein]-L-lysine = [E2 ubiquitin-conjugating enzyme]-L-cysteine + [acceptor protein]-N(6)-ubiquitinyl-L-lysine.. Its pathway is protein modification; protein ubiquitination. In terms of biological role, acts as an E3 ubiquitin-protein ligase, or as part of E3 complex, which accepts ubiquitin from specific E2 ubiquitin-conjugating enzymes and then transfers it to substrates. Negative regulator of the abscisic acid (ABA) signaling pathway which targets PYL4 and PYR1 ABA receptors in plasma membrane to promote their FREE1/FYVE1-dependent trafficking and degradation upon ubiquitynation; this process involves clathrin-mediated endocytosis and trafficking through the ESCRT pathway. Involved in the maintenance of seed longevity. May enhance gibberellins responses. This Arabidopsis thaliana (Mouse-ear cress) protein is E3 ubiquitin-protein ligase RSL1.